The primary structure comprises 99 residues: UPF0125 protein PM0166 (99 aa).

It belongs to the UPF0125 (RnfH) family.

The chain is UPF0125 protein PM0166 from Pasteurella multocida (strain Pm70).